The sequence spans 200 residues: Dephospho-CoA kinase (200 aa).

The region spanning 3 to 200 (RIGLTGGIGS…LIAEILTRIK (198 aa)) is the DPCK domain. 11 to 16 (GSGKST) serves as a coordination point for ATP.

The protein belongs to the CoaE family.

The protein localises to the cytoplasm. The enzyme catalyses 3'-dephospho-CoA + ATP = ADP + CoA + H(+). It participates in cofactor biosynthesis; coenzyme A biosynthesis; CoA from (R)-pantothenate: step 5/5. Its function is as follows. Catalyzes the phosphorylation of the 3'-hydroxyl group of dephosphocoenzyme A to form coenzyme A. The chain is Dephospho-CoA kinase from Corynebacterium efficiens (strain DSM 44549 / YS-314 / AJ 12310 / JCM 11189 / NBRC 100395).